A 63-amino-acid chain; its full sequence is Large ribosomal subunit protein uL29 (63 aa).

The protein belongs to the universal ribosomal protein uL29 family.

The chain is Large ribosomal subunit protein uL29 from Erwinia tasmaniensis (strain DSM 17950 / CFBP 7177 / CIP 109463 / NCPPB 4357 / Et1/99).